Reading from the N-terminus, the 100-residue chain is MIDTTWVIILSFLLFAIGTFGLLSRRNLLFILLSLEIMLNGIILLFIAASNLHGNNDGQIMYLLVLTLAASEVAVGLALVVQIYKQQQNLDVDTLTKLRG.

Helical transmembrane passes span 4-24 (TTWV…GLLS), 28-48 (LLFI…LFIA), and 60-80 (IMYL…LALV).

Belongs to the complex I subunit 4L family. As to quaternary structure, NDH-1 is composed of 13 different subunits. Subunits NuoA, H, J, K, L, M, N constitute the membrane sector of the complex.

Its subcellular location is the cell inner membrane. The catalysed reaction is a quinone + NADH + 5 H(+)(in) = a quinol + NAD(+) + 4 H(+)(out). Its function is as follows. NDH-1 shuttles electrons from NADH, via FMN and iron-sulfur (Fe-S) centers, to quinones in the respiratory chain. The immediate electron acceptor for the enzyme in this species is believed to be ubiquinone. Couples the redox reaction to proton translocation (for every two electrons transferred, four hydrogen ions are translocated across the cytoplasmic membrane), and thus conserves the redox energy in a proton gradient. The chain is NADH-quinone oxidoreductase subunit K from Shewanella woodyi (strain ATCC 51908 / MS32).